The primary structure comprises 130 residues: Cyclin-dependent kinase 4 inhibitor B (130 aa).

ANK repeat units lie at residues 5–34, 38–66, 71–100, and 104–130; these read SSDAGLATAAARGQVETVRQLLEAGADPNA, FGRRPIQVMMMGSAQVAELLLLHGAEPNC, TLTRPVHDAAREGFLDTLVVLHRAGARLDV, and WGRLPVDLAEEQGHRDIARYLHAATGD. T12 bears the Phosphothreonine mark.

This sequence belongs to the CDKN2 cyclin-dependent kinase inhibitor family. As to quaternary structure, heterodimer of CDKN2B with CDK4 or CDK6. In terms of tissue distribution, expressed ubiquitously.

Functionally, interacts strongly with CDK4 and CDK6. Potent inhibitor. Potential effector of TGF-beta induced cell cycle arrest. This is Cyclin-dependent kinase 4 inhibitor B (Cdkn2b) from Mus musculus (Mouse).